A 356-amino-acid chain; its full sequence is Uroporphyrinogen decarboxylase (356 aa).

Substrate contacts are provided by residues 27–31, D77, Y154, T209, and H327; that span reads RQAGR.

The protein belongs to the uroporphyrinogen decarboxylase family. In terms of assembly, homodimer.

The protein resides in the cytoplasm. The enzyme catalyses uroporphyrinogen III + 4 H(+) = coproporphyrinogen III + 4 CO2. The protein operates within porphyrin-containing compound metabolism; protoporphyrin-IX biosynthesis; coproporphyrinogen-III from 5-aminolevulinate: step 4/4. In terms of biological role, catalyzes the decarboxylation of four acetate groups of uroporphyrinogen-III to yield coproporphyrinogen-III. The protein is Uroporphyrinogen decarboxylase of Cellvibrio japonicus (strain Ueda107) (Pseudomonas fluorescens subsp. cellulosa).